The primary structure comprises 211 residues: Bcl-2 homologous antagonist/killer (211 aa).

The disordered stretch occupies residues 1–28 (MASGQGPGPPRQECGEPALPSASEEQVA). Ala2 carries the post-translational modification N-acetylalanine. Residues 74-88 (VGRQLAIIGDDINRR) carry the BH3 motif. Residues 117-136 (SLFESGINWGRVVALLGFGY) carry the BH1 motif. Zn(2+)-binding residues include Asp160 and His164. The BH2 signature appears at 169 to 184 (RWIAQRGGWVAALNLG). A helical membrane pass occupies residues 188–205 (ILNVLVVLGVVLLGQFVV).

It belongs to the Bcl-2 family. In terms of assembly, homodimer. Formation of the homodimer is zinc-dependent. Forms heterodimers with BCL2 and BCL2L1 isoform Bcl-X(L). Forms heterooligomers with BAX. Interacts with BCL2A1. Interacts with RTL10/BOP. Interacts with VDAC1. Interacts with GIMAP3/IAN4 and GIMAP5/IAN5. As to quaternary structure, (Microbial infection) Interacts with vaccinia virus protein F1. (Microbial infection) Interacts with myxoma virus protein M11L. In terms of assembly, (Microbial infection) Interacts with Epstein-Barr virus protein BALF1. As to quaternary structure, (Microbial infection) Interacts with adenovirus protein E1B 19K. Expressed in a wide variety of tissues, with highest levels in the heart and skeletal muscle.

It localises to the mitochondrion outer membrane. In terms of biological role, plays a role in the mitochondrial apoptotic process. Upon arrival of cell death signals, promotes mitochondrial outer membrane (MOM) permeabilization by oligomerizing to form pores within the MOM. This releases apoptogenic factors into the cytosol, including cytochrome c, promoting the activation of caspase 9 which in turn processes and activates the effector caspases. The chain is Bcl-2 homologous antagonist/killer (BAK1) from Homo sapiens (Human).